Here is a 150-residue protein sequence, read N- to C-terminus: MSDKFHILLLNGPNLNLLGTREPEKYGYTTLAEIVSQLEIQAQGMDVALSHLQSNAEHALIDSIHQARGNTDFILINPAAFTHTSVALRDALLGVQIPFIEIHLSNVHAREPFRHHSYLSDIAVGVICGLGADGYNFALQAAVNRLSKSN.

Tyrosine 26 acts as the Proton acceptor in catalysis. Positions 77, 83, and 90 each coordinate substrate. Histidine 103 serves as the catalytic Proton donor. Substrate contacts are provided by residues 104 to 105 and arginine 114; that span reads LS.

Belongs to the type-II 3-dehydroquinase family. As to quaternary structure, homododecamer.

The enzyme catalyses 3-dehydroquinate = 3-dehydroshikimate + H2O. It participates in metabolic intermediate biosynthesis; chorismate biosynthesis; chorismate from D-erythrose 4-phosphate and phosphoenolpyruvate: step 3/7. In terms of biological role, catalyzes a trans-dehydration via an enolate intermediate. This is 3-dehydroquinate dehydratase from Yersinia pseudotuberculosis serotype O:1b (strain IP 31758).